Reading from the N-terminus, the 732-residue chain is Segment polarity protein dishevelled homolog DVL-2 (732 aa).

Residues 1 to 82 (MAETKVIYHL…RVVSWLVSSE (82 aa)) enclose the DIX domain. Disordered stretches follow at residues 81–181 (SETS…SSST) and 195–237 (EEDD…SSFS). Residues 98 to 111 (DPPPVPPPVPPPPA) show a composition bias toward pro residues. Residues 146–157 (MRRDRVRRRDST) show a composition bias toward basic and acidic residues. Residues 202-213 (RFSSSTEQSSAS) show a composition bias toward polar residues. A compositionally biased stretch (basic residues) spans 215–227 (LLKRHRRRRKQRP). Residues 250 to 335 (TVTLNMEKYN…KPGPIILTVA (86 aa)) enclose the PDZ domain. The region spanning 424-498 (PESGLEVRDR…SEQCYYIFGD (75 aa)) is the DEP domain. 3 stretches are compositionally biased toward low complexity: residues 570-589 (MGSA…SNRS), 612-629 (KSGS…SIRR), and 637-647 (PPSERSTSSRP). The disordered stretch occupies residues 570–660 (MGSAGSQHSE…HPPSVHSYAA (91 aa)).

Belongs to the DSH family. As to quaternary structure, can form homomultimers. Interacts with prickle1. Interacts (via the PDZ domain) with ccdc88c/dal and dact1-B/dpr. Interacts (via the DIX domain) with ARP/Axin-related protein and dact1-A/frodo. Interacts with sdc4, possibly via fz7. Interacts directly (via the DEP domain) with efnb1/ephrin-B1. May interact indirectly with the phosphorylated ephrin receptors ephb1 and ephb2 via SH domain-containing adapters. In terms of processing, phosphorylated. Phosphorylation is controlled by frizzled proteins, correlates with the onset of embryo dorsalizing events and is higher in the dorsal half of early cleavage embryos. Phosphorylated on tyrosine residues in response to association with efnb1/ephrin-B1.

The protein resides in the cytoplasm. It is found in the cytoplasmic vesicle. It localises to the cell projection. Its subcellular location is the cilium. The protein localises to the nucleus. The protein resides in the cell membrane. Functionally, involved in at least 2 independent signaling cascades, controlling cell fate via canonical Wnt signaling and cell polarity via a planar cell polarity (PCP) cascade. Acts synergistically with dal/dapple-like to activate Wnt signaling, stabilizing ctnnb1/beta-catenin and leading to dorsal axis formation. Also prevents degradation of ctnnb1/beta-catenin by displacing gsk3 from a complex with ARP/Axin-related protein. Has an additional role in anterior-posterior (A/P) axis formation, specifying different neuroectodermal cell fates along the A/P axis in a dose-dependent manner by activating several early patterning genes. In the PCP pathway, required at the cell membrane for PCP-mediated neural and mesodermal convergent extension during gastrulation and subsequent neural tube closure, acting to activate jnk. Also involved in blastopore closure and archenteron elongation during early, but not late, gastrulation. Associates with ephrin receptors and ligands and acts as part of a downstream PCP pathway to mediate ephrin-mediated cell repulsion via activation of rhoa. Required for efnb1/ephrin-B1-driven movement of non-retinal progenitor cells into the retina during eye field formation. Patterns the hindbrain. Required for ciliogenesis. Controls the docking of basal bodies to the apical plasma membrane; mediates the activation, but not localization of rhoa at the apical surface of ciliated cells during basal body docking. Furthermore, required for the association of basal bodies with membrane-bound vesicles and the vesicle-trafficking protein exoc4/sec8, and this association is in turn required for basal body docking. Once basal bodies are docked, required for the planar polarization of basal bodies that underlies ciliary beating and the directional fluid flow across ciliated epithelia. The protein is Segment polarity protein dishevelled homolog DVL-2 of Xenopus tropicalis (Western clawed frog).